The primary structure comprises 66 residues: Large ribosomal subunit protein uL29 (66 aa).

This sequence belongs to the universal ribosomal protein uL29 family.

The chain is Large ribosomal subunit protein uL29 from Rhizobium meliloti (strain 1021) (Ensifer meliloti).